Here is a 78-residue protein sequence, read N- to C-terminus: Teretoxin Tsu6.15 (78 aa).

A signal peptide spans 1-21 (MATSGRLLCFCLVLGLVFESL). Residues 22–47 (GYSEARPPRDRKRTVTAKRYDPLAQR) constitute a propeptide that is removed on maturation.

This sequence belongs to the teretoxin M (TM) superfamily. Contains 3 disulfide bonds. As to expression, expressed by the venom duct.

The protein localises to the secreted. This is Teretoxin Tsu6.15 from Terebra subulata (Chocolate spotted auger).